A 413-amino-acid polypeptide reads, in one-letter code: L-cysteine:1D-myo-inositol 2-amino-2-deoxy-alpha-D-glucopyranoside ligase (413 aa).

Residue Cys43 coordinates Zn(2+). Residues 43 to 46 (CGIT), Thr58, and 81 to 83 (NIT) contribute to the L-cysteinyl-5'-AMP site. Residues 45 to 55 (ITPYDATHLGH) carry the 'HIGH' region motif. Positions 187 to 192 (ERGGDP) match the 'ERGGDP' region motif. Trp227 is a binding site for L-cysteinyl-5'-AMP. Cys231 contributes to the Zn(2+) binding site. Residue 249–251 (GND) coordinates L-cysteinyl-5'-AMP. Zn(2+) is bound at residue His256. Val283 serves as a coordination point for L-cysteinyl-5'-AMP. The 'KMSKS' region motif lies at 289–293 (KMSKS).

The protein belongs to the class-I aminoacyl-tRNA synthetase family. MshC subfamily. Monomer. Zn(2+) serves as cofactor.

It catalyses the reaction 1D-myo-inositol 2-amino-2-deoxy-alpha-D-glucopyranoside + L-cysteine + ATP = 1D-myo-inositol 2-(L-cysteinylamino)-2-deoxy-alpha-D-glucopyranoside + AMP + diphosphate + H(+). Functionally, catalyzes the ATP-dependent condensation of GlcN-Ins and L-cysteine to form L-Cys-GlcN-Ins. This chain is L-cysteine:1D-myo-inositol 2-amino-2-deoxy-alpha-D-glucopyranoside ligase, found in Gordonia bronchialis (strain ATCC 25592 / DSM 43247 / BCRC 13721 / JCM 3198 / KCTC 3076 / NBRC 16047 / NCTC 10667) (Rhodococcus bronchialis).